Here is a 1028-residue protein sequence, read N- to C-terminus: Contactin-3 (1028 aa).

An N-terminal signal peptide occupies residues 1 to 19 (MMLSWKQLILLSFIGCLAG). 6 consecutive Ig-like C2-type domains span residues 26–117 (PVFV…AKLQ), 122–208 (ENFK…ARVL), 227–313 (PKIE…GRLT), 318–402 (PYWV…AELK), 408–497 (PDFS…LVVT), and 499–593 (PTRI…AELI). Disulfide bonds link Cys50/Cys100, Cys144/Cys196, Cys249/Cys297, Cys339/Cys386, and Cys431/Cys479. 2 N-linked (GlcNAc...) asparagine glycosylation sites follow: Asn65 and Asn193. Asn377, Asn468, Asn489, and Asn538 each carry an N-linked (GlcNAc...) asparagine glycan. The cysteines at positions 521 and 577 are disulfide-linked. 4 consecutive Fibronectin type-III domains span residues 600-698 (PPEN…TEEA), 703-800 (APSE…SAEE), 805-901 (APSH…TKKT), and 902-998 (PPSQ…TSMD). Residues 684–714 (GEPSLPSEKVRTEEAAPEVAPSEVSGGGGSR) form a disordered region. N-linked (GlcNAc...) asparagine glycosylation is found at Asn765, Asn860, Asn895, Asn913, Asn931, and Asn956. Ser1002 is lipidated: GPI-anchor amidated serine. Residues 1003 to 1028 (TSAISDIHPVSGYISVLLFFIVNALW) constitute a propeptide, removed in mature form.

It belongs to the immunoglobulin superfamily. Contactin family. In terms of assembly, interacts with PTPRG. Specifically expressed in brain. Not expressed in peripheral tissues such as heart, lung, liver, spleen, kidney and skeletal muscle. In brain, it is restricted to subsets of neurons such as Purkinje cells of the cerebellum, granule cells of the dentate gyrus, and neurons in the superficial layers of the cerebral cortex.

The protein resides in the cell membrane. Contactins mediate cell surface interactions during nervous system development. Has some neurite outgrowth-promoting activity. This chain is Contactin-3 (Cntn3), found in Rattus norvegicus (Rat).